The primary structure comprises 216 residues: uncharacterized protein (216 aa).

It localises to the plastid. Its subcellular location is the chloroplast. This is an uncharacterized protein from Pyropia yezoensis (Susabi-nori).